Consider the following 70-residue polypeptide: Ubiquinol-cytochrome c reductase complex assembly factor 5 (70 aa).

Residues 1–19 lie on the Mitochondrial matrix side of the membrane; the sequence is MFTRAQVRRILQRVPGKQR. The chain crosses the membrane as a helical span at residues 20–41; it reads FGIYRFLPFFFVLGGTMEWIMI. The Mitochondrial intermembrane segment spans residues 42 to 70; the sequence is KVRVGQETFYDVYRRKASERQYQRRLEDE.

It belongs to the UQCC5 family. As to quaternary structure, associates with the mitochondrial ribosome. Interacts with UQCC6. Interacts with MT-CYB; interacts with newly synthesizes MT-CYB. Forms a complex, named COMB/coordinator of mitochondrial CYTB biogenesis, composed of UQCC1, UQCC2, UQCC4, UQCC5 and UQCC6; regulates MT-CYB synthesis and promotes its membrane insertion.

Its subcellular location is the mitochondrion inner membrane. In terms of biological role, required for the assembly and stability of the mitochondrial ubiquinol-cytochrome c reductase complex (complex III (CIII) or cytochrome b-c1 complex), a multisubunit transmembrane complex that is part of the mitochondrial electron transport chain (ETC) which drives oxidative phosphorylation. Mediates early complex III biogenesis. Participates in regulating the levels of electron transport chain proteins, and therefore energy supply, in response to changes in energy demand. Also involved in the first steps of cytochrome c oxidase complex (complex IV) assembly. The polypeptide is Ubiquinol-cytochrome c reductase complex assembly factor 5 (Homo sapiens (Human)).